The chain runs to 352 residues: MVRTPCCKAELGLKKGAWTPEEDQKLLSYLNRHGEGGWRTLPEKAGLKRCGKSCRLRWANYLRPDIKRGEFTEDEERSIISLHALHGNKWSAIARGLPGRTDNEIKNYWNTHIKKRLIKKGIDPVTHKGITSGTDKSENLPEKQNVNLTTSDHDLDNDKAKKNNKNFGLSSASFLNKVANRFGKRINQSVLSEIIGSGGPLASTSHTTNTTTTSVSVDSESVKSTSSSFAPTSNLLCHGTVATTPVSSNFDVDGNVNLTCSSSTFSDSSVNNPLMYCDNFVGNNNVDDEDTIGFSTFLNDEDFMMLEESCVENTAFMKELTRFLHEDENDVVDVTPVYERQDLFDEIDNYFG.

2 consecutive HTH myb-type domains span residues 10 to 62 and 63 to 117; these read ELGL…ANYL and RPDI…KKRL. 2 consecutive DNA-binding regions (H-T-H motif) follow at residues 38–62 and 90–113; these read WRTL…ANYL and WSAI…NTHI. Disordered stretches follow at residues 128–157 and 198–219; these read KGIT…DLDN and GGPL…SVDS. Low complexity predominate over residues 203-219; sequence STSHTTNTTTTSVSVDS.

As to quaternary structure, can form complexes with MYC2, MYC3 or MYC4. In terms of tissue distribution, expressed in vegetative parts of the plant, mainly in mature rosette leaves and in trichomes. Detected in roots, but not in mature flowers or siliques.

It is found in the nucleus. Transcription factor positively regulating indolic glucosinolate biosynthetic pathway genes. The polypeptide is Transcription factor MYB51 (MYB51) (Arabidopsis thaliana (Mouse-ear cress)).